A 261-amino-acid polypeptide reads, in one-letter code: Undecaprenyl-diphosphatase (261 aa).

8 helical membrane-spanning segments follow: residues 1-21 (MTVLQAIVLGLVQGVGEFLPI), 40-60 (GLTFDVALHLGTLIAVVAYFW), 79-99 (GRLFWYLIVASIPGAIFGVLF), 106-126 (IFRSPLLIALTLTLMGLGLWW), 140-160 (VNLFDGIIVGISQALAIIPGV), 185-205 (FLMSVPIIAGAALLKLKELPL), 210-230 (LAFIAGVLTAAVVGFLAIKFL), and 239-259 (YLLFTGYRILLAALIVAVFWL).

It belongs to the UppP family.

The protein resides in the cell membrane. The enzyme catalyses di-trans,octa-cis-undecaprenyl diphosphate + H2O = di-trans,octa-cis-undecaprenyl phosphate + phosphate + H(+). In terms of biological role, catalyzes the dephosphorylation of undecaprenyl diphosphate (UPP). Confers resistance to bacitracin. This chain is Undecaprenyl-diphosphatase, found in Moorella thermoacetica (strain ATCC 39073 / JCM 9320).